The sequence spans 158 residues: Large ribosomal subunit protein uL16 (158 aa).

The segment at 1–22 (MLSPKRTKYRKQQRGRMKGKAT) is disordered.

Belongs to the universal ribosomal protein uL16 family. Part of the 50S ribosomal subunit.

Its function is as follows. Binds 23S rRNA and is also seen to make contacts with the A and possibly P site tRNAs. The polypeptide is Large ribosomal subunit protein uL16 (Synechococcus sp. (strain JA-3-3Ab) (Cyanobacteria bacterium Yellowstone A-Prime)).